A 227-amino-acid chain; its full sequence is Cytidylate kinase (227 aa).

12-20 provides a ligand contact to ATP; sequence GPSGAGKGT.

The protein belongs to the cytidylate kinase family. Type 1 subfamily.

It localises to the cytoplasm. The enzyme catalyses CMP + ATP = CDP + ADP. It catalyses the reaction dCMP + ATP = dCDP + ADP. This chain is Cytidylate kinase, found in Sodalis glossinidius (strain morsitans).